The following is a 404-amino-acid chain: Sorting nexin-5 (404 aa).

Ala-2 bears the N-acetylalanine mark. Residues 25 to 172 (LNVDPSLQID…HVFLEYDQDL (148 aa)) enclose the PX domain. A 1,2-diacyl-sn-glycero-3-phospho-(1D-myo-inositol-4,5-bisphosphate)-binding positions include 40–46 (SERDKVK), 99–105 (FDGPREK), and 113–116 (EGSM). The interval 169 to 261 (DQDLSVRRKN…HSLALEEPTV (93 aa)) is interaction with DOCK1. Positions 183–200 (FGGFFKSVVKSADEVLFT) are membrane-binding amphipathic helix. Ser-193 is subject to Phosphoserine. The 203-residue stretch at 202–404 (VKEVDDFFEQ…QSCIDLFKNN (203 aa)) folds into the BAR domain. Lys-275 bears the N6-acetyllysine mark.

It belongs to the sorting nexin family. In terms of assembly, forms heterodimers with BAR domain-containing sorting nexins SNX1 and SNX2; does not homodimerize. The heterodimers are proposed to self-assemble into helical arrays on the membrane to stabilize and expand local membrane curvature underlying endosomal tubule formation. Thought to be a component of the originally described retromer complex (also called SNX-BAR retromer) which is a pentamer containing the heterotrimeric retromer cargo-selective complex (CSC), also described as vacuolar protein sorting subcomplex (VPS), and a heterodimeric membrane-deforming subcomplex formed between SNX1 or SNX2 and SNX5 or SNX6 (also called SNX-BAR subcomplex); the respective CSC and SNX-BAR subcomplexes associate with low affinity. Interacts with SNX1, SNX2, VPS26A, VPS29, VPS35, DCTN1, DOCK1, MIB1, PIP5K1C isoform 3. Interacts with HGS; increased by PIP5K1C isoform 3 kinase activity and by PtdIns(3P) and/or PtdIns(3,4)P2. As to quaternary structure, (Microbial infection) Interacts with human cytomegalovirus proteins UL35 and UL35A; these interactions inhibit the ability of USP7 to form nuclear bodies.

Its subcellular location is the endosome. The protein resides in the early endosome. The protein localises to the early endosome membrane. It localises to the cell membrane. It is found in the cytoplasmic vesicle membrane. Its subcellular location is the cytoplasm. The protein resides in the cell projection. The protein localises to the phagocytic cup. It localises to the ruffle. In terms of biological role, involved in several stages of intracellular trafficking. Interacts with membranes containing phosphatidylinositol 3-phosphate (PtdIns(3P)) or phosphatidylinositol 3,4-bisphosphate (PtdIns(3,4)P2). Acts in part as component of the retromer membrane-deforming SNX-BAR subcomplex. The SNX-BAR retromer mediates retrograde transport of cargo proteins from endosomes to the trans-Golgi network (TGN) and is involved in endosome-to-plasma membrane transport for cargo protein recycling. The SNX-BAR subcomplex functions to deform the donor membrane into a tubular profile called endosome-to-TGN transport carrier (ETC). Does not have in vitro vesicle-to-membrane remodeling activity. Involved in retrograde transport of lysosomal enzyme receptor IGF2R. May function as link between endosomal transport vesicles and dynactin. Plays a role in the internalization of EGFR after EGF stimulation. Involved in EGFR endosomal sorting and degradation; the function involves PIP5K1C isoform 3 and is retromer-independent. Together with PIP5K1C isoform 3 facilitates HGS interaction with ubiquitinated EGFR, which initiates EGFR sorting to intraluminal vesicles (ILVs) of the multivesicular body for subsequent lysosomal degradation. Involved in E-cadherin sorting and degradation; inhibits PIP5K1C isoform 3-mediated E-cadherin degradation. Plays a role in macropinocytosis. The polypeptide is Sorting nexin-5 (SNX5) (Homo sapiens (Human)).